Here is a 380-residue protein sequence, read N- to C-terminus: MLLSIGMLMLSATQVYTILTVQLFAFLNLLPVEADILAYNFENASQTFEDLPARFGYRLPAEGLKGFLINSKPENACEPIVPPPLKDNSSGTFIVLIRRLDCNFDIKVLNAQRAGYKAAIVHNVDSDDLISMGSNDIDILKKIDIPSVFIGESSANSLKDEFTYEKGGHVILVPELSLPLEYYLIPFLIIVGICLILIVIFMITKFVQDRHRNRRNRLRKDQLKKLPVHKFKKGDEYDVCAICLEEYEDGDKLRILPCSHAYHCKCVDPWLTKTKKTCPVCKQKVVPSQGDSDSDTDSSQEENQVSEHTPLLPPSASARTQSFGSLSESHSHHMTESSDYEDDDNEETDSSDADNEITDHSVVVQLQPNGEPDYNIANTV.

A signal peptide spans 1-34 (MLLSIGMLMLSATQVYTILTVQLFAFLNLLPVEA). At 35 to 182 (DILAYNFENA…VPELSLPLEY (148 aa)) the chain is on the lumenal side. The PA domain maps to 64 to 160 (LKGFLINSKP…GESSANSLKD (97 aa)). N-linked (GlcNAc...) asparagine glycosylation is present at asparagine 88. The helical transmembrane segment at 183–203 (YLIPFLIIVGICLILIVIFMI) threads the bilayer. Residues 204–380 (TKFVQDRHRN…EPDYNIANTV (177 aa)) are Cytoplasmic-facing. The RING-type; atypical zinc finger occupies 240-282 (CAICLEEYEDGDKLRILPCSHAYHCKCVDPWLTKTKKTCPVCK). Positions 285-380 (VVPSQGDSDS…EPDYNIANTV (96 aa)) are disordered. Over residues 338–356 (SDYEDDDNEETDSSDADNE) the composition is skewed to acidic residues.

As to quaternary structure, interacts with ERN1. Post-translationally, autoubiquitinated.

The protein localises to the endoplasmic reticulum membrane. Its subcellular location is the late endosome membrane. The protein resides in the lysosome membrane. It is found in the nucleus inner membrane. The enzyme catalyses S-ubiquitinyl-[E2 ubiquitin-conjugating enzyme]-L-cysteine + [acceptor protein]-L-lysine = [E2 ubiquitin-conjugating enzyme]-L-cysteine + N(6)-ubiquitinyl-[acceptor protein]-L-lysine.. The protein operates within protein modification; protein ubiquitination. E3 ubiquitin-protein ligase that regulates cell proliferation. Involved in apoptosis regulation. Mediates ER stress-induced activation of JNK signaling pathway and apoptosis by promoting ERN1 activation and splicing of XBP1 mRNA. Also involved in protein trafficking and localization. This is E3 ubiquitin-protein ligase RNF13 (Rnf13) from Rattus norvegicus (Rat).